Consider the following 176-residue polypeptide: ATP-dependent protease subunit HslV (176 aa).

Thr-2 is a catalytic residue. The Na(+) site is built by Ala-157, Cys-160, and Thr-163.

This sequence belongs to the peptidase T1B family. HslV subfamily. In terms of assembly, a double ring-shaped homohexamer of HslV is capped on each side by a ring-shaped HslU homohexamer. The assembly of the HslU/HslV complex is dependent on binding of ATP.

The protein resides in the cytoplasm. The catalysed reaction is ATP-dependent cleavage of peptide bonds with broad specificity.. Allosterically activated by HslU binding. Protease subunit of a proteasome-like degradation complex believed to be a general protein degrading machinery. This chain is ATP-dependent protease subunit HslV, found in Buchnera aphidicola subsp. Acyrthosiphon pisum (strain APS) (Acyrthosiphon pisum symbiotic bacterium).